Here is an 80-residue protein sequence, read N- to C-terminus: Exodeoxyribonuclease 7 small subunit (80 aa).

The interval 60–80 is disordered; the sequence is LIDSDGTEHNLDPNNASAPEE. A compositionally biased stretch (basic and acidic residues) spans 61 to 70; that stretch reads IDSDGTEHNL. Residues 71–80 show a composition bias toward polar residues; sequence DPNNASAPEE.

Belongs to the XseB family. Heterooligomer composed of large and small subunits.

It localises to the cytoplasm. The catalysed reaction is Exonucleolytic cleavage in either 5'- to 3'- or 3'- to 5'-direction to yield nucleoside 5'-phosphates.. Its function is as follows. Bidirectionally degrades single-stranded DNA into large acid-insoluble oligonucleotides, which are then degraded further into small acid-soluble oligonucleotides. The protein is Exodeoxyribonuclease 7 small subunit of Lactobacillus acidophilus (strain ATCC 700396 / NCK56 / N2 / NCFM).